Reading from the N-terminus, the 471-residue chain is 4-aminobutyrate aminotransferase (471 aa).

135–136 (GA) serves as a coordination point for pyridoxal 5'-phosphate. Arg192 contacts substrate. Lys326 bears the N6-(pyridoxal phosphate)lysine mark. Thr351 contributes to the pyridoxal 5'-phosphate binding site.

Belongs to the class-III pyridoxal-phosphate-dependent aminotransferase family. As to quaternary structure, homodimer and homotetramer. Pyridoxal 5'-phosphate serves as cofactor.

Its subcellular location is the cytoplasm. The catalysed reaction is 4-aminobutanoate + 2-oxoglutarate = succinate semialdehyde + L-glutamate. Required for the degradation of gamma-aminobutyric acid (GABA), which is important for utilization of GABA as nitrogen source and for oxidative stress tolerance. Deaminates GABA to succinate semialdehyde, which in turn is converted to succinate by the succinate-semialdehyde dehydrogenase UGA2. Cannot transaminate beta-alanine (BAL). In Saccharomyces cerevisiae (strain ATCC 204508 / S288c) (Baker's yeast), this protein is 4-aminobutyrate aminotransferase (UGA1).